We begin with the raw amino-acid sequence, 564 residues long: 60 kDa lysophospholipase (564 aa).

The Asparaginase/glutaminase domain maps to 9–355 (RRLLAIYTGG…NDRKKLLAKD (347 aa)). The active-site Acyl-ester intermediate is the T19. Residues 41-350 (TLHMFHDEEY…PGLSLNDRKK (310 aa)) form an asparaginase region. Substrate-binding positions include 84-86 (DSS) and 116-117 (TD). ANK repeat units lie at residues 141–170 (GAQVPIHALWSDGRENLLGALLMAGQYVIP), 396–426 (VLLPGLALAAAHAGDLDTLQAFVELDRDLNL), 430–459 (SGQTPLHVAARRGHAAVVTMLLQRGADVDA), 463–492 (DGQSPLLLAVRGRHQSVIGLLRAAGARLSP), and 530–559 (DGHCALQVAEAAGNADVVALLQSFKDSVCA). S478 bears the Phosphoserine mark.

It in the N-terminal section; belongs to the asparaginase 1 family. In terms of assembly, monomer.

The enzyme catalyses a 1-acyl-sn-glycero-3-phosphocholine + H2O = sn-glycerol 3-phosphocholine + a fatty acid + H(+). It carries out the reaction L-asparagine + H2O = L-aspartate + NH4(+). It catalyses the reaction a 1-O-alkyl-2-acetyl-sn-glycero-3-phosphocholine + H2O = a 1-O-alkyl-sn-glycero-3-phosphocholine + acetate + H(+). The catalysed reaction is 1-hexadecanoyl-sn-glycero-3-phosphocholine + H2O = sn-glycerol 3-phosphocholine + hexadecanoate + H(+). The enzyme catalyses 2 1-hexadecanoyl-sn-glycero-3-phosphocholine = 1,2-dihexadecanoyl-sn-glycero-3-phosphocholine + sn-glycerol 3-phosphocholine. It carries out the reaction 1-octadecanoyl-sn-glycero-3-phosphocholine + H2O = octadecanoate + sn-glycerol 3-phosphocholine + H(+). It catalyses the reaction 1-(9Z-octadecenoyl)-sn-glycero-3-phosphocholine + H2O = sn-glycerol 3-phosphocholine + (9Z)-octadecenoate + H(+). The catalysed reaction is 1-hexadecanoyl-sn-glycero-3-phosphoethanolamine + H2O = sn-glycero-3-phosphoethanolamine + hexadecanoate + H(+). The enzyme catalyses 1-(9Z-octadecenoyl)-sn-glycero-3-phosphoethanolamine + H2O = sn-glycero-3-phosphoethanolamine + (9Z)-octadecenoate + H(+). It carries out the reaction 1-hexadecanoyl-sn-glycero-3-phosphoethanolamine + 1-hexadecanoyl-sn-glycero-3-phosphocholine = 1,2-dihexadecanoyl-sn-glycero-3-phosphoethanolamine + sn-glycerol 3-phosphocholine. It catalyses the reaction 2-(5Z,8Z,11Z,14Z)-eicosatetraenoyl-sn-glycero-3-phosphocholine + H2O = sn-glycerol 3-phosphocholine + (5Z,8Z,11Z,14Z)-eicosatetraenoate + H(+). The catalysed reaction is 2-hexadecanoyl-sn-glycero-3-phosphocholine + H2O = sn-glycerol 3-phosphocholine + hexadecanoate + H(+). The enzyme catalyses 2 2-hexadecanoyl-sn-glycero-3-phosphocholine = 1,2-dihexadecanoyl-sn-glycero-3-phosphocholine + sn-glycerol 3-phosphocholine. It carries out the reaction 1-O-(9Z)-octadecenoyl-2-O-acetyl-sn-glycero-3-phosphocholine + H2O = 2-acetyl-sn-glycero-3-phosphocholine + (9Z)-octadecenoate + H(+). It catalyses the reaction a 1-acyl-sn-glycero-3-phospho-(1D-myo-inositol) + 1-hexadecanoyl-sn-glycero-3-phosphocholine = a 1-acyl-2-hexadecanoyl-sn-glycero-3-phospho-(1D-myo-inositol) + sn-glycerol 3-phosphocholine. The catalysed reaction is 2 2-(5Z,8Z,11Z,14Z)-eicosatetraenoyl-sn-glycero-3-phosphocholine = 1,2-di-(5Z,8Z,11Z,14Z-eicosatetraenoyl)-sn-glycero-3-phosphocholine + sn-glycerol 3-phosphocholine. In terms of biological role, exhibits lysophospholipase, transacylase, PAF acetylhydrolase and asparaginase activities. Can catalyze three types of transacylation reactions: (1) acyl transfer from 1-acyl-sn-glycero-3-phosphocholine (1-acyl-GPC) to the sn-1(3) positions of glycerol and 2-acylglycerol (sn-1 to -1(3) transfer), (2) acyl transfer from 1-acyl-GPC to the sn-2 positions of 1-acyl-GPC, 1-acyl-sn-glycero-3-phosphoethanolamine (1-acyl-GPE), and other lysophospholipids (sn-1 to -2 transfer) and (3) acyl transfer from 2-acyl-GPC to the sn-1 position of 2-acyl-GPC and 2-acyl-GPE (sn-2 to -1 transfer). Mediates the synthesis of 1-arachidonoyl species of phospholipids by transferring the arachidonoyl residue from 2-arachidonoyl lysophospholipid to the sn-1 position of 2-acyl lysophospholipid. The sequence is that of 60 kDa lysophospholipase (Aspg) from Mus musculus (Mouse).